A 368-amino-acid chain; its full sequence is Ubl carboxyl-terminal hydrolase 18 (368 aa).

Residues 31–48 (MKRKRVLSRDLCSAWDSP) form a mediates interaction with IFNAR2 region. The interval 48-109 (PHGLVGLHNI…LLLLLEKMQD (62 aa)) is mediates interaction with STAT2. Residues 52 to 366 (VGLHNIGQTC…TAYLLVYTKT (315 aa)) enclose the USP domain. Cys-61 (nucleophile) is an active-site residue. Residues 299-308 (ELFAVIAHVG) form a mediates interaction with STAT2 and necessary for the negative regulation of the type I IFN signaling pathway region. The segment at 309–368 (MADFGHYCAYIRNPVDGKWFCFNDSHVCWVTWKDVQCTYGNHRYRWRETAYLLVYTKTGS) is mediates interaction with IFNAR2. Catalysis depends on His-314, which acts as the Proton acceptor.

The protein belongs to the peptidase C19 family. In terms of assembly, interacts with STAT2; the interaction is direct. Interacts with IFNAR2; indirectly via STAT2, it negatively regulates the assembly of the ternary interferon-IFNAR1-IFNAR2 complex and inhibits type I interferon signaling. Interacts with STING1. Interacts with USP20.

The enzyme catalyses Thiol-dependent hydrolysis of ester, thioester, amide, peptide and isopeptide bonds formed by the C-terminal Gly of ubiquitin (a 76-residue protein attached to proteins as an intracellular targeting signal).. Interferon-induced ISG15-specific protease that plays a crucial role for maintaining a proper balance of ISG15-conjugated proteins in cells. Regulates protein ISGylation by efficiently cleaving ISG15 conjugates linked via isopeptide bonds. Regulates T-cell activation and T-helper 17 (Th17) cell differentiation by deubiquitinating TAK1, likely to keep TAK1-TAB complexes in steady conditions. In turn, restricts activation of NF-kappa-B, NFAT, and JNK as well as expression of IL2 in T-cells after TCR activation. Acts as a molecular adapter with USP20 to promote innate antiviral response through deubiquitinating STING1. Involved also in the negative regulation of the inflammatory response triggered by type I interferon. Upon recruitment by STAT2 to the type I interferon receptor subunit IFNAR2 interferes with the assembly of the ternary interferon-IFNAR1-IFNAR2 complex and acts as a negative regulator of the type I interferon signaling pathway. This is Ubl carboxyl-terminal hydrolase 18 (Usp18) from Mus musculus (Mouse).